Consider the following 338-residue polypeptide: Ferredoxin--NADP reductase (338 aa).

FAD contacts are provided by Asp38, Gln46, Tyr51, Val91, Phe125, Asp291, and Thr331.

The protein belongs to the ferredoxin--NADP reductase type 2 family. Homodimer. Requires FAD as cofactor.

The catalysed reaction is 2 reduced [2Fe-2S]-[ferredoxin] + NADP(+) + H(+) = 2 oxidized [2Fe-2S]-[ferredoxin] + NADPH. This Orientia tsutsugamushi (strain Boryong) (Rickettsia tsutsugamushi) protein is Ferredoxin--NADP reductase.